The chain runs to 154 residues: Endoribonuclease YbeY (154 aa).

Zn(2+) contacts are provided by His114, His118, and His124.

It belongs to the endoribonuclease YbeY family. Zn(2+) serves as cofactor.

The protein localises to the cytoplasm. Its function is as follows. Single strand-specific metallo-endoribonuclease involved in late-stage 70S ribosome quality control and in maturation of the 3' terminus of the 16S rRNA. This chain is Endoribonuclease YbeY, found in Haemophilus influenzae (strain PittEE).